The primary structure comprises 262 residues: Glucosamine-6-phosphate deaminase (262 aa).

Asp-63 functions as the Proton acceptor; for enolization step in the catalytic mechanism. Residue Asn-129 is the For ring-opening step of the active site. The active-site Proton acceptor; for ring-opening step is the His-131. The For ring-opening step role is filled by Glu-136.

Belongs to the glucosamine/galactosamine-6-phosphate isomerase family. NagB subfamily.

The enzyme catalyses alpha-D-glucosamine 6-phosphate + H2O = beta-D-fructose 6-phosphate + NH4(+). It participates in amino-sugar metabolism; N-acetylneuraminate degradation; D-fructose 6-phosphate from N-acetylneuraminate: step 5/5. Its function is as follows. Catalyzes the reversible isomerization-deamination of glucosamine 6-phosphate (GlcN6P) to form fructose 6-phosphate (Fru6P) and ammonium ion. This is Glucosamine-6-phosphate deaminase from Bacillus cereus (strain B4264).